The chain runs to 396 residues: Calcium-binding and spermatid-specific protein 1 (396 aa).

A disordered region spans residues Met-1–Pro-21. Residue Ser-274 is modified to Phosphoserine. Residues Glu-276–Ala-296 form a disordered region. The span at Glu-283–Pro-293 shows a compositional bias: acidic residues. A Phosphothreonine; by CK2 modification is found at Thr-288. Residues Ser-320 and Ser-377 each carry the phosphoserine modification. Positions Glu-336–Ile-396 are disordered.

The protein localises to the cytoplasm. It is found in the mitochondrion inner membrane. Its subcellular location is the cell projection. It localises to the cilium. The protein resides in the flagellum. The protein localises to the cytoplasmic vesicle. It is found in the secretory vesicle. Its subcellular location is the acrosome. In terms of biological role, calcium-binding protein. Essential for maintaining the structural integrity of the sperm flagella. This is Calcium-binding and spermatid-specific protein 1 (CABS1) from Macaca fascicularis (Crab-eating macaque).